We begin with the raw amino-acid sequence, 360 residues long: Protein RecA (360 aa).

65-72 (GPESSGKT) lines the ATP pocket.

Belongs to the RecA family.

The protein localises to the cytoplasm. Its function is as follows. Can catalyze the hydrolysis of ATP in the presence of single-stranded DNA, the ATP-dependent uptake of single-stranded DNA by duplex DNA, and the ATP-dependent hybridization of homologous single-stranded DNAs. It interacts with LexA causing its activation and leading to its autocatalytic cleavage. In Tolumonas auensis (strain DSM 9187 / NBRC 110442 / TA 4), this protein is Protein RecA.